Here is a 275-residue protein sequence, read N- to C-terminus: Expansin-B6 (275 aa).

The N-terminal stretch at 1–25 (MAARMGSKVAAILAILSVLVVHGSC) is a signal peptide. N33 is a glycosylation site (N-linked (GlcNAc...) asparagine). The Expansin-like EG45 domain maps to 64–170 (GGACGFKNVN…RRVPCNYPGL (107 aa)). Intrachain disulfides connect C67/C95, C98/C165, and C103/C109. The region spanning 183-270 (VYFAVLVEYE…NWSPNSNYRS (88 aa)) is the Expansin-like CBD domain.

It belongs to the expansin family. Expansin B subfamily. Expressed in internodes.

The protein resides in the secreted. It localises to the cell wall. It is found in the membrane. In terms of biological role, may cause loosening and extension of plant cell walls by disrupting non-covalent bonding between cellulose microfibrils and matrix glucans. No enzymatic activity has been found. May be required for rapid internodal elongation in deepwater rice during submergence. This is Expansin-B6 (EXPB6) from Oryza sativa subsp. japonica (Rice).